The sequence spans 458 residues: MSKTLFDKIWEKHVITGEIGEAQLIYVDLHLVHEVTSPQPFDGLRSTNRRVRRPDLTFATMDHNVPTKDIFNVQDQMSRLQMDTLVKNTKEFDIPLASIGDDKQGIVHVVGPERGLTQPAKVIVCGDSHTATHGAFGAIAFGIGTSEVEHVLATQTIWQVKPKTMGIKVTGKLPKNTYAKDIIMGIIAKYGVSFGVGYAIEFYGETVENLSMEARMTMCNMSIEAGSRTGMVQPDQTTFDYIEGREQAPKDFESAKNYWSQFYTDDESDFDETLTFDVSNLKPMVTWGTNPGMATPVDQSLPAIKDDNDANAYEYIGLHPNMKPVDINLDYIFIGSCTNSRYEDLEIAANMMKGHHLAPNVTAWVVPGSRAIRNRAIKSGIAQIFEEAGCEWREPGCSACLAMNPDKIPAGKHVASTSNRNFIGRQGAGSRTHLASPAMVAAAGIAGHFVDITTDEFV.

[4Fe-4S] cluster-binding residues include C337, C397, and C400.

Belongs to the aconitase/IPM isomerase family. LeuC type 1 subfamily. As to quaternary structure, heterodimer of LeuC and LeuD. [4Fe-4S] cluster serves as cofactor.

The enzyme catalyses (2R,3S)-3-isopropylmalate = (2S)-2-isopropylmalate. It participates in amino-acid biosynthesis; L-leucine biosynthesis; L-leucine from 3-methyl-2-oxobutanoate: step 2/4. Catalyzes the isomerization between 2-isopropylmalate and 3-isopropylmalate, via the formation of 2-isopropylmaleate. The chain is 3-isopropylmalate dehydratase large subunit from Leuconostoc mesenteroides subsp. mesenteroides (strain ATCC 8293 / DSM 20343 / BCRC 11652 / CCM 1803 / JCM 6124 / NCDO 523 / NBRC 100496 / NCIMB 8023 / NCTC 12954 / NRRL B-1118 / 37Y).